The primary structure comprises 606 residues: Homeobox protein B-H1 (606 aa).

Polar residues predominate over residues 1 to 14 (MKDSMSILTQTPSE). 4 disordered regions span residues 1–65 (MKDS…PAVA), 104–188 (YKQQ…HPHA), 261–340 (APAG…AFTD), and 508–606 (AAAN…QIQV). Basic residues predominate over residues 21-40 (QLHHHLSHHHHPALHHHPVL). Positions 41–65 (QHHYSLQQQHQQQQQQQPPAPPAVA) are enriched in low complexity. Residues 108–118 (QQHHHHHHQSH) show a composition bias toward basic residues. A compositionally biased stretch (low complexity) spans 119–138 (HNNNNHSGGSSGGTSPTHHN). Residues 166–188 (HHLHPQSHPHPHPHPHSHPHPHA) are compositionally biased toward basic residues. Over residues 266 to 284 (ELDDSSDYHEENEDCDSDE) the composition is skewed to acidic residues. Over residues 286 to 295 (GSAGGGGGGS) the composition is skewed to gly residues. Residues 297 to 314 (HMDDHSVCSNGGKDDDGN) show a composition bias toward basic and acidic residues. Residues 315–325 (SIKSGSTSDMS) are compositionally biased toward polar residues. The segment at residues 331-390 (QRKARTAFTDHQLQTLEKSFERQKYLSVQERQELAHKLDLSDCQVKTWYQNRRTKWMRQT) is a DNA-binding region (homeobox). Over residues 513-522 (GGPPPPPPPS) the composition is skewed to pro residues. A compositionally biased stretch (low complexity) spans 523–534 (SAAAATGGSPSP). A compositionally biased stretch (pro residues) spans 561–576 (ASPPLPLPLARPPSTP).

Belongs to the Antp homeobox family. As to expression, abundant in the eye-antenna imaginal disk.

It is found in the nucleus. In terms of biological role, functionally required in R1 and R6 receptor cells and primary pigment cells for normal eye development. This is Homeobox protein B-H1 (B-H1) from Drosophila ananassae (Fruit fly).